We begin with the raw amino-acid sequence, 101 residues long: NAD(P)H-quinone oxidoreductase subunit 4L (101 aa).

The next 3 membrane-spanning stretches (helical) occupy residues 3-23, 30-50, and 64-84; these read LRYFLLLAAALFCIGIYGLIT, VLMSIELLLNAVNLNLMAFSN, and VFVITVAAAEAAVGLAIVLAI.

Belongs to the complex I subunit 4L family. In terms of assembly, NDH-1 can be composed of about 15 different subunits; different subcomplexes with different compositions have been identified which probably have different functions.

Its subcellular location is the cellular thylakoid membrane. It catalyses the reaction a plastoquinone + NADH + (n+1) H(+)(in) = a plastoquinol + NAD(+) + n H(+)(out). The enzyme catalyses a plastoquinone + NADPH + (n+1) H(+)(in) = a plastoquinol + NADP(+) + n H(+)(out). In terms of biological role, NDH-1 shuttles electrons from an unknown electron donor, via FMN and iron-sulfur (Fe-S) centers, to quinones in the respiratory and/or the photosynthetic chain. The immediate electron acceptor for the enzyme in this species is believed to be plastoquinone. Couples the redox reaction to proton translocation, and thus conserves the redox energy in a proton gradient. Cyanobacterial NDH-1 also plays a role in inorganic carbon-concentration. The protein is NAD(P)H-quinone oxidoreductase subunit 4L of Nostoc sp. (strain PCC 7120 / SAG 25.82 / UTEX 2576).